The chain runs to 125 residues: Small ribosomal subunit protein uS13 (125 aa).

The span at 94 to 116 shows a compositional bias: basic residues; it reads GLPVRGQRTRTNARTRKGPRKAV. The segment at 94 to 125 is disordered; that stretch reads GLPVRGQRTRTNARTRKGPRKAVRASSAKAGR.

This sequence belongs to the universal ribosomal protein uS13 family. Part of the 30S ribosomal subunit. Forms a loose heterodimer with protein S19. Forms two bridges to the 50S subunit in the 70S ribosome.

Functionally, located at the top of the head of the 30S subunit, it contacts several helices of the 16S rRNA. In the 70S ribosome it contacts the 23S rRNA (bridge B1a) and protein L5 of the 50S subunit (bridge B1b), connecting the 2 subunits; these bridges are implicated in subunit movement. Contacts the tRNAs in the A and P-sites. The sequence is that of Small ribosomal subunit protein uS13 from Nitrosospira multiformis (strain ATCC 25196 / NCIMB 11849 / C 71).